The sequence spans 141 residues: Large-conductance mechanosensitive channel (141 aa).

The next 3 helical transmembrane spans lie at 14–34 (VMDL…VKSL), 38–58 (IIMP…YFLG), and 81–101 (GSFI…FLMV).

The protein belongs to the MscL family. Homopentamer.

Its subcellular location is the cell inner membrane. In terms of biological role, channel that opens in response to stretch forces in the membrane lipid bilayer. May participate in the regulation of osmotic pressure changes within the cell. The sequence is that of Large-conductance mechanosensitive channel from Rhizobium rhizogenes (strain K84 / ATCC BAA-868) (Agrobacterium radiobacter).